The sequence spans 263 residues: Oxidoreductase UcpA (263 aa).

Residue 10–32 (LITGASQGIGEGIARVFARHGAN) participates in NAD(+) binding. S141 lines the substrate pocket. The active-site Proton acceptor is Y155.

It belongs to the short-chain dehydrogenases/reductases (SDR) family.

The polypeptide is Oxidoreductase UcpA (ucpA) (Salmonella typhi).